Reading from the N-terminus, the 453-residue chain is Chromosomal replication initiator protein DnaA (453 aa).

Residues 1–78 (MTENEQLFWN…FEIFNAEITA (78 aa)) form a domain I, interacts with DnaA modulators region. A domain II region spans residues 78–112 (ANYVSNDLHLQETSFSNYQQSSNEVNTLPIRKIDS). Residues 113–331 (NLKEKYTFAN…GALKNISLVA (219 aa)) form a domain III, AAA+ region region. ATP contacts are provided by Gly-157, Gly-159, Lys-160, and Thr-161. Residues 332–453 (DFKHAKTITV…EIETIKNKIR (122 aa)) are domain IV, binds dsDNA.

This sequence belongs to the DnaA family. In terms of assembly, oligomerizes as a right-handed, spiral filament on DNA at oriC.

It is found in the cytoplasm. Plays an essential role in the initiation and regulation of chromosomal replication. ATP-DnaA binds to the origin of replication (oriC) to initiate formation of the DNA replication initiation complex once per cell cycle. Binds the DnaA box (a 9 base pair repeat at the origin) and separates the double-stranded (ds)DNA. Forms a right-handed helical filament on oriC DNA; dsDNA binds to the exterior of the filament while single-stranded (ss)DNA is stabiized in the filament's interior. The ATP-DnaA-oriC complex binds and stabilizes one strand of the AT-rich DNA unwinding element (DUE), permitting loading of DNA polymerase. After initiation quickly degrades to an ADP-DnaA complex that is not apt for DNA replication. Binds acidic phospholipids. The protein is Chromosomal replication initiator protein DnaA of Streptococcus agalactiae serotype Ia (strain ATCC 27591 / A909 / CDC SS700).